Consider the following 520-residue polypeptide: Cytochrome P450 monooxygenase 176 (520 aa).

N-linked (GlcNAc...) asparagine glycosylation is present at Asn-6. The chain crosses the membrane as a helical span at residues 10-27 (LLVVAGALFLTFLTTRFI). 2 N-linked (GlcNAc...) asparagine glycosylation sites follow: Asn-141 and Asn-270. Cys-445 contacts heme. Asn-517 is a glycosylation site (N-linked (GlcNAc...) asparagine).

It belongs to the cytochrome P450 family. It depends on heme as a cofactor.

The protein resides in the membrane. It functions in the pathway secondary metabolite biosynthesis. In terms of biological role, cytochrome P450 monooxygenase that is able to use delta(6)-protoilludene as a substrate to produce delta(6)-protoilludene-5-ol and an unidentified hydroxyprotoilludene. Is also able to use phenanthrene as a substrate for oxidation. This is Cytochrome P450 monooxygenase 176 from Postia placenta (strain ATCC 44394 / Madison 698-R) (Brown rot fungus).